The chain runs to 246 residues: MPALSGPQYLGEGLKLIMRPGLRLFVLIPLSINLLVFALLIGFAMQQFSHWVDLLMPSLPDWLGFLQYIVWPLFVLLVLVIVFFTFTMVANIISAPFNGFLSEKVEVVVRGRDDFPPFSWAELLAMIPRTMGREMRKLAYFLPRALVLLVLSFVPGVNLVATPLWILFGIWMMAVQYIDYPADNHKLGWNEMLAWLRSKRWACMGFGGMTYLALLIPLVNLVMMPAAVAGATLFWVREEGEKALVR.

The next 4 membrane-spanning stretches (helical) occupy residues 24 to 44 (LFVL…IGFA), 69 to 89 (IVWP…FTMV), 148 to 168 (LLVL…WILF), and 214 to 234 (LLIP…ATLF).

This sequence belongs to the CysZ family.

Its subcellular location is the cell inner membrane. In terms of biological role, high affinity, high specificity proton-dependent sulfate transporter, which mediates sulfate uptake. Provides the sulfur source for the cysteine synthesis pathway. This Pseudomonas paraeruginosa (strain DSM 24068 / PA7) (Pseudomonas aeruginosa (strain PA7)) protein is Sulfate transporter CysZ.